The primary structure comprises 379 residues: L-lactate dehydrogenase (379 aa).

Residues 1-379 enclose the FMN hydroxy acid dehydrogenase domain; sequence MIISASTDYR…LSRDSLVKIP (379 aa). Tyr-24 lines the substrate pocket. Ser-106 and Gln-127 together coordinate FMN. Position 129 (Tyr-129) interacts with substrate. Thr-155 contributes to the FMN binding site. Position 164 (Arg-164) interacts with substrate. Lys-251 is a binding site for FMN. His-275 (proton acceptor) is an active-site residue. Arg-278 is a substrate binding site. 306–330 provides a ligand contact to FMN; the sequence is DSGIRTGLDVVRMLALGADCTLLGR.

It belongs to the FMN-dependent alpha-hydroxy acid dehydrogenase family. It depends on FMN as a cofactor.

It is found in the cell inner membrane. It carries out the reaction (S)-lactate + A = pyruvate + AH2. Its function is as follows. Catalyzes the conversion of L-lactate to pyruvate. Is coupled to the respiratory chain. The protein is L-lactate dehydrogenase of Vibrio parahaemolyticus serotype O3:K6 (strain RIMD 2210633).